Here is a 116-residue protein sequence, read N- to C-terminus: Ig heavy chain V-A1 region BS-5 (116 aa).

Q1 is modified (pyrrolidone carboxylic acid). One can recognise an Ig-like domain in the interval 1 to 107; it reads QSVEESGGRL…LVHLAFVDVW (107 aa).

In Oryctolagus cuniculus (Rabbit), this protein is Ig heavy chain V-A1 region BS-5.